Here is a 525-residue protein sequence, read N- to C-terminus: Arylsulfatase G (525 aa).

An N-terminal signal peptide occupies residues 1-16 (MGWLFLKVLLVGMAFS). Positions 44, 45, and 84 each coordinate Ca(2+). Residue Cys84 is the Nucleophile of the active site. Residue Cys84 is modified to 3-oxoalanine (Cys). Asn117 is a glycosylation site (N-linked (GlcNAc...) asparagine). Lys137 provides a ligand contact to substrate. The active site involves His139. Ser162 is a binding site for substrate. N-linked (GlcNAc...) asparagine glycosylation is present at Asn215. His251 contacts substrate. Ca(2+)-binding residues include Asp302 and Asn303. N-linked (GlcNAc...) asparagine glycosylation is found at Asn356 and Asn497.

It belongs to the sulfatase family. Ca(2+) is required as a cofactor. Post-translationally, N-glycosylated with both high mannose and complex type sugars. The conversion to 3-oxoalanine (also known as C-formylglycine, FGly), of a serine or cysteine residue in prokaryotes and of a cysteine residue in eukaryotes, is critical for catalytic activity. In terms of processing, the 63-kDa precursor undergoes proteolytic processing in two steps, yielding two fragments in the first step (apparent molecular masses of 44 and 18 kDa). In the second step, the 44-kDa fragment is processed further to the 34- and 10-kDa chains. The 10-kDa chain is a cleavage product of the 44-kDa fragment but linked to the 18-kDa chain through a disulfide bridge. As to expression, highly expressed in the spleen, kidney, liver, brain, and testis (at protein level).

Its subcellular location is the lysosome. It catalyses the reaction an aryl sulfate + H2O = a phenol + sulfate + H(+). The enzyme catalyses Hydrolysis of the 3-sulfate groups of the N-sulfo-D-glucosamine 3-O-sulfate units of heparin.. Functionally, displays arylsulfatase activity at acidic pH towards the artificial substrate p-nitrocatechol sulfate. Catalyzes the hydrolysis of the 3-sulfate groups of the N-sulfo-D-glucosamine 3-O-sulfate units of heparin. This Mus musculus (Mouse) protein is Arylsulfatase G (Arsg).